The primary structure comprises 750 residues: NAD(P)H-quinone oxidoreductase subunit 5, chloroplastic (750 aa).

Transmembrane regions (helical) follow at residues 9-29 (WIIP…LLLF), 39-59 (IWAF…LDLS), 89-109 (IDSL…LVLI), 125-145 (FAYM…SNLI), 147-167 (IYFF…FWFT), 185-205 (GDFG…SLEF), 219-239 (NEMN…GSVA), 267-287 (ATMV…FVLL), 290-310 (IMNT…TLAI), 327-347 (LGYM…FHLI), 354-374 (ALLF…VGYS), 396-416 (FFFL…CFWS), 427-447 (YSPI…FYMF), 554-574 (FSML…ISFS), 606-626 (FFTN…IASF), and 728-748 (ILLY…FVFI).

It belongs to the complex I subunit 5 family. In terms of assembly, NDH is composed of at least 16 different subunits, 5 of which are encoded in the nucleus.

Its subcellular location is the plastid. The protein localises to the chloroplast thylakoid membrane. It catalyses the reaction a plastoquinone + NADH + (n+1) H(+)(in) = a plastoquinol + NAD(+) + n H(+)(out). The catalysed reaction is a plastoquinone + NADPH + (n+1) H(+)(in) = a plastoquinol + NADP(+) + n H(+)(out). In terms of biological role, NDH shuttles electrons from NAD(P)H:plastoquinone, via FMN and iron-sulfur (Fe-S) centers, to quinones in the photosynthetic chain and possibly in a chloroplast respiratory chain. The immediate electron acceptor for the enzyme in this species is believed to be plastoquinone. Couples the redox reaction to proton translocation, and thus conserves the redox energy in a proton gradient. The polypeptide is NAD(P)H-quinone oxidoreductase subunit 5, chloroplastic (ndhF) (Phaseolus vulgaris (Kidney bean)).